We begin with the raw amino-acid sequence, 324 residues long: NADH-cytochrome b5 reductase 1 (324 aa).

A helical membrane pass occupies residues 49–69; the sequence is LNIVLAFVVGLIGSVVVLLYF. An FAD-binding FR-type domain is found at 81-184; that stretch reads TQWQQYRLME…KGPKGQMRYA (104 aa). FAD contacts are provided by residues 164–179 and 190–222; these read GSMK…GPKG and HIGM…QIDF.

It belongs to the flavoprotein pyridine nucleotide cytochrome reductase family. Monomer. Component of the 2-(3-amino-3-carboxypropyl)histidine synthase complex composed of DPH1, DPH2, DPH3 and a NADH-dependent reductase, predominantly CBR1. The cofactor is FAD.

It localises to the mitochondrion outer membrane. The enzyme catalyses 2 Fe(III)-[cytochrome b5] + NADH = 2 Fe(II)-[cytochrome b5] + NAD(+) + H(+). The catalysed reaction is 2 Fe(3+)-[Dph3] + NADH = 2 Fe(2+)-[Dph3] + NAD(+) + H(+). The protein operates within protein modification; peptidyl-diphthamide biosynthesis. Functionally, NADH-dependent reductase for DPH3 and cytochrome b5. Required for the first step of diphthamide biosynthesis, a post-translational modification of histidine which occurs in elongation factor 2. DPH1 and DPH2 transfer a 3-amino-3-carboxypropyl (ACP) group from S-adenosyl-L-methionine (SAM) to a histidine residue, the reaction is assisted by a reduction system comprising DPH3 and a NADH-dependent reductase, predominantly CBR1. By reducing DPH3, also involved in the formation of the tRNA wobble base modification mcm5s 2U (5-methoxycarbonylmethyl-2-thiouridine), mediated by the elongator complex. The cytochrome b5/NADH cytochrome b5 reductase electron transfer system supports the catalytic activity of several sterol biosynthetic enzymes. This chain is NADH-cytochrome b5 reductase 1 (CBR1), found in Mycosarcoma maydis (Corn smut fungus).